A 389-amino-acid polypeptide reads, in one-letter code: DEAD-box ATP-dependent RNA helicase CshC (389 aa).

A Q motif motif is present at residues Met1–Lys26. In terms of domain architecture, Helicase ATP-binding spans Ile29–Val199. ATP is bound at residue Ser42–Thr49. The DEAD box signature appears at Asp147 to Asp150. Residues Leu209–Lys379 enclose the Helicase C-terminal domain. Positions Val368–Arg389 are disordered. The segment covering Lys373–Arg389 has biased composition (basic residues).

It carries out the reaction ATP + H2O = ADP + phosphate + H(+). Its function is as follows. DEAD-box RNA helicase. Probably has an RNA-dependent ATPase activity and a 3' to 5' RNA helicase activity that uses the energy of ATP hydrolysis to destabilize and unwind short RNA duplexes. The polypeptide is DEAD-box ATP-dependent RNA helicase CshC (cshC) (Bacillus cereus (strain ATCC 14579 / DSM 31 / CCUG 7414 / JCM 2152 / NBRC 15305 / NCIMB 9373 / NCTC 2599 / NRRL B-3711)).